The following is a 359-amino-acid chain: UDP-N-acetylglucosamine--N-acetylmuramyl-(pentapeptide) pyrophosphoryl-undecaprenol N-acetylglucosamine transferase (359 aa).

UDP-N-acetyl-alpha-D-glucosamine contacts are provided by residues 15-17 (TGG), N127, R166, S191, I245, 264-269 (ALTVSE), and Q290.

This sequence belongs to the glycosyltransferase 28 family. MurG subfamily.

Its subcellular location is the cell inner membrane. It carries out the reaction di-trans,octa-cis-undecaprenyl diphospho-N-acetyl-alpha-D-muramoyl-L-alanyl-D-glutamyl-meso-2,6-diaminopimeloyl-D-alanyl-D-alanine + UDP-N-acetyl-alpha-D-glucosamine = di-trans,octa-cis-undecaprenyl diphospho-[N-acetyl-alpha-D-glucosaminyl-(1-&gt;4)]-N-acetyl-alpha-D-muramoyl-L-alanyl-D-glutamyl-meso-2,6-diaminopimeloyl-D-alanyl-D-alanine + UDP + H(+). Its pathway is cell wall biogenesis; peptidoglycan biosynthesis. Cell wall formation. Catalyzes the transfer of a GlcNAc subunit on undecaprenyl-pyrophosphoryl-MurNAc-pentapeptide (lipid intermediate I) to form undecaprenyl-pyrophosphoryl-MurNAc-(pentapeptide)GlcNAc (lipid intermediate II). This is UDP-N-acetylglucosamine--N-acetylmuramyl-(pentapeptide) pyrophosphoryl-undecaprenol N-acetylglucosamine transferase from Pseudomonas putida (strain ATCC 47054 / DSM 6125 / CFBP 8728 / NCIMB 11950 / KT2440).